Reading from the N-terminus, the 834-residue chain is Glycerol-3-phosphate acyltransferase (834 aa).

The short motif at 309-314 (CHRSHI) is the HXXXXD motif element.

Belongs to the GPAT/DAPAT family.

The protein localises to the cell inner membrane. It catalyses the reaction sn-glycerol 3-phosphate + an acyl-CoA = a 1-acyl-sn-glycero-3-phosphate + CoA. The protein operates within phospholipid metabolism; CDP-diacylglycerol biosynthesis; CDP-diacylglycerol from sn-glycerol 3-phosphate: step 1/3. This Pseudomonas paraeruginosa (strain DSM 24068 / PA7) (Pseudomonas aeruginosa (strain PA7)) protein is Glycerol-3-phosphate acyltransferase.